The chain runs to 460 residues: UDP-N-acetylmuramoylalanine--D-glutamate ligase (460 aa).

122 to 128 (GSNGKST) contributes to the ATP binding site.

The protein belongs to the MurCDEF family.

It is found in the cytoplasm. The catalysed reaction is UDP-N-acetyl-alpha-D-muramoyl-L-alanine + D-glutamate + ATP = UDP-N-acetyl-alpha-D-muramoyl-L-alanyl-D-glutamate + ADP + phosphate + H(+). It participates in cell wall biogenesis; peptidoglycan biosynthesis. Its function is as follows. Cell wall formation. Catalyzes the addition of glutamate to the nucleotide precursor UDP-N-acetylmuramoyl-L-alanine (UMA). This chain is UDP-N-acetylmuramoylalanine--D-glutamate ligase, found in Jannaschia sp. (strain CCS1).